The following is a 300-amino-acid chain: Bifunctional protein FolD (300 aa).

Residues 169–171 and Ile235 each bind NADP(+); that span reads GHS.

This sequence belongs to the tetrahydrofolate dehydrogenase/cyclohydrolase family. Homodimer.

It carries out the reaction (6R)-5,10-methylene-5,6,7,8-tetrahydrofolate + NADP(+) = (6R)-5,10-methenyltetrahydrofolate + NADPH. The catalysed reaction is (6R)-5,10-methenyltetrahydrofolate + H2O = (6R)-10-formyltetrahydrofolate + H(+). It functions in the pathway one-carbon metabolism; tetrahydrofolate interconversion. Catalyzes the oxidation of 5,10-methylenetetrahydrofolate to 5,10-methenyltetrahydrofolate and then the hydrolysis of 5,10-methenyltetrahydrofolate to 10-formyltetrahydrofolate. This chain is Bifunctional protein FolD, found in Rhodobacter capsulatus (strain ATCC BAA-309 / NBRC 16581 / SB1003).